We begin with the raw amino-acid sequence, 195 residues long: Nucleoside triphosphate pyrophosphatase (195 aa).

The Proton acceptor role is filled by D70.

This sequence belongs to the Maf family. A divalent metal cation is required as a cofactor.

The protein localises to the cytoplasm. It carries out the reaction a ribonucleoside 5'-triphosphate + H2O = a ribonucleoside 5'-phosphate + diphosphate + H(+). It catalyses the reaction a 2'-deoxyribonucleoside 5'-triphosphate + H2O = a 2'-deoxyribonucleoside 5'-phosphate + diphosphate + H(+). Nucleoside triphosphate pyrophosphatase. May have a dual role in cell division arrest and in preventing the incorporation of modified nucleotides into cellular nucleic acids. The protein is Nucleoside triphosphate pyrophosphatase of Synechocystis sp. (strain ATCC 27184 / PCC 6803 / Kazusa).